Consider the following 220-residue polypeptide: Nucleolar protein 12 (220 aa).

Positions 31-86 (HKRKMQRRKTAVEEIKRKIKEEQKKMKEERHKEYMKMLKEREEALCELEENDELEE) form a coiled coil. Residues 109–220 (ISDLDLSGIR…QTGKTRRRRN (112 aa)) are disordered. A compositionally biased stretch (basic and acidic residues) spans 139-148 (EKGADEEKPK). Composition is skewed to basic residues over residues 176 to 186 (RSQRKSGKRPS) and 205 to 220 (KTQRRKQTGKTRRRRN).

It belongs to the RRP17 family.

The protein localises to the nucleus. Its subcellular location is the nucleolus. Functionally, may bind to rRNA. The protein is Nucleolar protein 12 (nol12) of Xenopus laevis (African clawed frog).